The primary structure comprises 392 residues: Heat-inducible transcription repressor HrcA (392 aa).

This sequence belongs to the HrcA family.

Negative regulator of class I heat shock genes (grpE-dnaK-dnaJ and groELS operons). Prevents heat-shock induction of these operons. The chain is Heat-inducible transcription repressor HrcA from Chlamydia trachomatis serovar D (strain ATCC VR-885 / DSM 19411 / UW-3/Cx).